The following is a 277-amino-acid chain: Release factor glutamine methyltransferase (277 aa).

S-adenosyl-L-methionine is bound by residues glycine 117 to glycine 121, aspartate 140, tryptophan 168, and asparagine 183. Asparagine 183–tyrosine 186 contacts substrate.

Belongs to the protein N5-glutamine methyltransferase family. PrmC subfamily.

It catalyses the reaction L-glutaminyl-[peptide chain release factor] + S-adenosyl-L-methionine = N(5)-methyl-L-glutaminyl-[peptide chain release factor] + S-adenosyl-L-homocysteine + H(+). Methylates the class 1 translation termination release factors RF1/PrfA and RF2/PrfB on the glutamine residue of the universally conserved GGQ motif. This chain is Release factor glutamine methyltransferase, found in Shigella flexneri.